The primary structure comprises 198 residues: Large ribosomal subunit protein bL21 (198 aa).

Belongs to the bacterial ribosomal protein bL21 family. In terms of assembly, part of the 50S ribosomal subunit. Contacts protein L20.

Its function is as follows. This protein binds to 23S rRNA in the presence of protein L20. The protein is Large ribosomal subunit protein bL21 of Ruegeria sp. (strain TM1040) (Silicibacter sp.).